We begin with the raw amino-acid sequence, 186 residues long: Peptidyl-tRNA hydrolase (186 aa).

Residue Tyr-13 participates in tRNA binding. His-18 functions as the Proton acceptor in the catalytic mechanism. Tyr-59, Asn-61, and Asn-107 together coordinate tRNA.

Belongs to the PTH family. In terms of assembly, monomer.

It is found in the cytoplasm. The catalysed reaction is an N-acyl-L-alpha-aminoacyl-tRNA + H2O = an N-acyl-L-amino acid + a tRNA + H(+). In terms of biological role, hydrolyzes ribosome-free peptidyl-tRNAs (with 1 or more amino acids incorporated), which drop off the ribosome during protein synthesis, or as a result of ribosome stalling. Functionally, catalyzes the release of premature peptidyl moieties from peptidyl-tRNA molecules trapped in stalled 50S ribosomal subunits, and thus maintains levels of free tRNAs and 50S ribosomes. In Thermotoga sp. (strain RQ2), this protein is Peptidyl-tRNA hydrolase.